The chain runs to 77 residues: MAEVFDRVKEIIIDRLDVEESKVTMEASFKDDLDADSLDVVELVMELEDEFDMEIADEDAEKINTVGDAVDYINSKA.

The Carrier domain maps to Ala2–Ala77. Ser37 is subject to O-(pantetheine 4'-phosphoryl)serine.

This sequence belongs to the acyl carrier protein (ACP) family. Post-translationally, 4'-phosphopantetheine is transferred from CoA to a specific serine of apo-ACP by AcpS. This modification is essential for activity because fatty acids are bound in thioester linkage to the sulfhydryl of the prosthetic group.

It localises to the cytoplasm. The protein operates within lipid metabolism; fatty acid biosynthesis. In terms of biological role, carrier of the growing fatty acid chain in fatty acid biosynthesis. This is Acyl carrier protein from Oceanobacillus iheyensis (strain DSM 14371 / CIP 107618 / JCM 11309 / KCTC 3954 / HTE831).